The following is a 115-amino-acid chain: Large ribosomal subunit protein bL20 (115 aa).

Belongs to the bacterial ribosomal protein bL20 family.

Binds directly to 23S ribosomal RNA and is necessary for the in vitro assembly process of the 50S ribosomal subunit. It is not involved in the protein synthesizing functions of that subunit. This Salinibacter ruber (strain DSM 13855 / M31) protein is Large ribosomal subunit protein bL20.